The primary structure comprises 163 residues: Ribonuclease P protein component 4 (163 aa).

Positions 66, 69, 96, and 99 each coordinate Zn(2+). The tract at residues 110 to 163 is disordered; that stretch reads GPRGGAPISPPAAEYGSGGRDSGEREDKGPQGPPRQGGRDNRQGGGHQGGPKGD. A compositionally biased stretch (gly residues) spans 152–163; sequence QGGGHQGGPKGD.

This sequence belongs to the eukaryotic/archaeal RNase P protein component 4 family. Consists of a catalytic RNA component and at least 4-5 protein subunits. Zn(2+) serves as cofactor.

Its subcellular location is the cytoplasm. The catalysed reaction is Endonucleolytic cleavage of RNA, removing 5'-extranucleotides from tRNA precursor.. Part of ribonuclease P, a protein complex that generates mature tRNA molecules by cleaving their 5'-ends. This Aeropyrum pernix (strain ATCC 700893 / DSM 11879 / JCM 9820 / NBRC 100138 / K1) protein is Ribonuclease P protein component 4.